The primary structure comprises 683 residues: Phosphomethylpyrimidine synthase (683 aa).

Residues Asn-235, Met-264, Tyr-293, His-329, 349 to 351 (SRG), 390 to 393 (DGMR), and Glu-429 each bind substrate. His-433 contacts Zn(2+). Tyr-456 is a substrate binding site. A Zn(2+)-binding site is contributed by His-497. Residues Cys-577, Cys-580, and Cys-585 each contribute to the [4Fe-4S] cluster site. The segment at 647–683 (RQSPGVESTSLESTSLESTVLESTSLESTALEKAKEV) is disordered. The segment covering 653-675 (ESTSLESTSLESTVLESTSLEST) has biased composition (low complexity).

The protein belongs to the ThiC family. Homodimer. [4Fe-4S] cluster serves as cofactor.

It catalyses the reaction 5-amino-1-(5-phospho-beta-D-ribosyl)imidazole + S-adenosyl-L-methionine = 4-amino-2-methyl-5-(phosphooxymethyl)pyrimidine + CO + 5'-deoxyadenosine + formate + L-methionine + 3 H(+). The protein operates within cofactor biosynthesis; thiamine diphosphate biosynthesis. Functionally, catalyzes the synthesis of the hydroxymethylpyrimidine phosphate (HMP-P) moiety of thiamine from aminoimidazole ribotide (AIR) in a radical S-adenosyl-L-methionine (SAM)-dependent reaction. The polypeptide is Phosphomethylpyrimidine synthase (Shewanella loihica (strain ATCC BAA-1088 / PV-4)).